A 212-amino-acid polypeptide reads, in one-letter code: Large ribosomal subunit protein bL25 (212 aa).

The disordered stretch occupies residues 181–212 (LSEPKEEVIEEDVEEVSADVPTVSETEEEDAE). Residues 188 to 197 (VIEEDVEEVS) are compositionally biased toward acidic residues.

Belongs to the bacterial ribosomal protein bL25 family. CTC subfamily. Part of the 50S ribosomal subunit; part of the 5S rRNA/L5/L18/L25 subcomplex. Contacts the 5S rRNA. Binds to the 5S rRNA independently of L5 and L18.

Functionally, this is one of the proteins that binds to the 5S RNA in the ribosome where it forms part of the central protuberance. The chain is Large ribosomal subunit protein bL25 from Finegoldia magna (strain ATCC 29328 / DSM 20472 / WAL 2508) (Peptostreptococcus magnus).